The primary structure comprises 258 residues: Acetylglutamate kinase (258 aa).

Residues 44-45 (GG), Arg66, and Asn158 each bind substrate. ATP contacts are provided by residues 181-186 (DVSGIL) and 209-211 (IIT).

This sequence belongs to the acetylglutamate kinase family. ArgB subfamily. In terms of assembly, homodimer.

It localises to the cytoplasm. The catalysed reaction is N-acetyl-L-glutamate + ATP = N-acetyl-L-glutamyl 5-phosphate + ADP. It functions in the pathway amino-acid biosynthesis; L-arginine biosynthesis; N(2)-acetyl-L-ornithine from L-glutamate: step 2/4. In terms of biological role, catalyzes the ATP-dependent phosphorylation of N-acetyl-L-glutamate. The polypeptide is Acetylglutamate kinase (Shigella flexneri).